We begin with the raw amino-acid sequence, 366 residues long: Phospho-N-acetylmuramoyl-pentapeptide-transferase (366 aa).

The next 10 helical transmembrane spans lie at 27–47 (AALFTSALIVFLFGPAMIASL), 71–91 (TPTMGGLMILTGIVVSSLLWA), 93–113 (LSSIYVVSTLLVTLGFGAIGF), 138–158 (FVIAAVAVFFMMQAALSAGAA), 174–194 (LMLNLGYFFVLFGGFVIVGAG), 205–225 (GLAIVPVMIASAAFGLIAYLA), 245–265 (LAVILGAVIGAGLGFLWFNAP), 268–288 (AIFMGDTGSLALGGLIGTVAV), 297–317 (IIIGGLFVIETLSVIIQVFWF), and 343–363 (QVVIRFWIIAVILAMVGLSTL).

Belongs to the glycosyltransferase 4 family. MraY subfamily. The cofactor is Mg(2+).

The protein resides in the cell inner membrane. The enzyme catalyses UDP-N-acetyl-alpha-D-muramoyl-L-alanyl-gamma-D-glutamyl-meso-2,6-diaminopimeloyl-D-alanyl-D-alanine + di-trans,octa-cis-undecaprenyl phosphate = di-trans,octa-cis-undecaprenyl diphospho-N-acetyl-alpha-D-muramoyl-L-alanyl-D-glutamyl-meso-2,6-diaminopimeloyl-D-alanyl-D-alanine + UMP. Its pathway is cell wall biogenesis; peptidoglycan biosynthesis. Its function is as follows. Catalyzes the initial step of the lipid cycle reactions in the biosynthesis of the cell wall peptidoglycan: transfers peptidoglycan precursor phospho-MurNAc-pentapeptide from UDP-MurNAc-pentapeptide onto the lipid carrier undecaprenyl phosphate, yielding undecaprenyl-pyrophosphoryl-MurNAc-pentapeptide, known as lipid I. This is Phospho-N-acetylmuramoyl-pentapeptide-transferase from Rhizobium meliloti (strain 1021) (Ensifer meliloti).